We begin with the raw amino-acid sequence, 488 residues long: Ribulose bisphosphate carboxylase large chain (488 aa).

Substrate is bound by residues asparagine 128 and threonine 178. The Proton acceptor role is filled by lysine 180. Residue lysine 182 coordinates substrate. Lysine 206, aspartate 208, and glutamate 209 together coordinate Mg(2+). Position 206 is an N6-carboxylysine (lysine 206). The Proton acceptor role is filled by histidine 298. Substrate is bound by residues arginine 299, histidine 331, and serine 383.

This sequence belongs to the RuBisCO large chain family. Type I subfamily. In terms of assembly, heterohexadecamer of 8 large chains and 8 small chains. It depends on Mg(2+) as a cofactor.

It catalyses the reaction 2 (2R)-3-phosphoglycerate + 2 H(+) = D-ribulose 1,5-bisphosphate + CO2 + H2O. The enzyme catalyses D-ribulose 1,5-bisphosphate + O2 = 2-phosphoglycolate + (2R)-3-phosphoglycerate + 2 H(+). Functionally, ruBisCO catalyzes two reactions: the carboxylation of D-ribulose 1,5-bisphosphate, the primary event in carbon dioxide fixation, as well as the oxidative fragmentation of the pentose substrate. Both reactions occur simultaneously and in competition at the same active site. This chain is Ribulose bisphosphate carboxylase large chain, found in Xanthobacter autotrophicus (strain ATCC BAA-1158 / Py2).